The sequence spans 375 residues: Alcohol dehydrogenase 1A (375 aa).

The residue at position 2 (S2) is an N-acetylserine. Position 23 is a phosphoserine (S23). Residue C47 participates in Zn(2+) binding. 48–52 (GTDDH) is an NAD(+) binding site. 6 residues coordinate Zn(2+): H68, C98, C101, C104, C112, and C175. Residues 200-205 (GLGGVG), D224, K229, I270, 293-295 (VGV), 318-320 (AVL), and R370 each bind NAD(+).

It belongs to the zinc-containing alcohol dehydrogenase family. Dimer of identical or heterodimer of closely related subunits alpha, beta, or gamma that are encoded by genes ADH1A, ADH1B, and ADH1C, respectively. Zn(2+) serves as cofactor.

Its subcellular location is the cytoplasm. It carries out the reaction a primary alcohol + NAD(+) = an aldehyde + NADH + H(+). The catalysed reaction is a secondary alcohol + NAD(+) = a ketone + NADH + H(+). The enzyme catalyses butan-1-ol + NAD(+) = butanal + NADH + H(+). It catalyses the reaction 1-propanol + NAD(+) = propanal + NADH + H(+). Alcohol dehydrogenase. Oxidizes primary as well as secondary alcohols. Ethanol is a very poor substrate. The protein is Alcohol dehydrogenase 1A (ADH1A) of Pongo abelii (Sumatran orangutan).